A 257-amino-acid chain; its full sequence is Outer dense fiber protein 4 (257 aa).

A disordered region spans residues 1 to 41 (MDAEYSGNEFPRSEGERDQHQRPGKERKSGEAGWGTGELGQ). Basic and acidic residues predominate over residues 11–30 (PRSEGERDQHQRPGKERKSG). Serine 64 carries the phosphoserine modification. 3 consecutive transmembrane segments (helical) span residues 80–100 (AQVL…VVAF), 152–172 (VTFI…FELE), and 179–199 (IGWS…CAIL).

Expressed in testis and sperm; especially localized to sperm tail (at protein level).

It is found in the membrane. Its function is as follows. Component of the outer dense fibers (ODF) of spermatozoa which could be involved in sperm tail structure, sperm movement and general organization of cellular cytoskeleton. This Homo sapiens (Human) protein is Outer dense fiber protein 4 (ODF4).